Consider the following 905-residue polypeptide: Protein LONGIFOLIA 2 (905 aa).

Disordered stretches follow at residues 42 to 136 (VSGG…GGLM), 232 to 268 (RLSL…RSSS), 285 to 315 (DTEQ…SRSV), 432 to 585 (STSP…SDSN), 606 to 626 (CDFP…IKQD), and 690 to 711 (VPFP…ECSP). A compositionally biased stretch (basic and acidic residues) spans 65–74 (ESDKETERSS). Over residues 90–117 (FESSSRPSFSSSPRSSSFSSAEVSTTAS) the composition is skewed to low complexity. The span at 286 to 296 (TEQRRENRFCD) shows a compositional bias: basic and acidic residues. 3 stretches are compositionally biased toward polar residues: residues 432 to 461 (STSP…SGKQ), 477 to 487 (LDSTKSNSPKT), and 501 to 516 (MTKS…SPRT). Basic and acidic residues predominate over residues 566–581 (PDDRLSDARSDLRSLR).

In terms of assembly, interacts (via C-terminus) with TON1A and TON1B.

It is found in the cytoplasm. It localises to the cytoskeleton. In association with LNG1, regulates leaf morphology by promoting longitudinal polar cell elongation independently of ROT3. Associates with microtubules and recruits TON1A and TON1B to the cytoskeleton through its C-terminus. In Arabidopsis thaliana (Mouse-ear cress), this protein is Protein LONGIFOLIA 2 (LNG2).